Here is a 715-residue protein sequence, read N- to C-terminus: Harpin secretion protein HrpI (715 aa).

Transmembrane regions (helical) follow at residues 23-43 (GAAI…TGLI), 45-65 (VLIA…MYLP), 69-89 (AFST…ALSI), 115-135 (GNLA…FLVI), 203-223 (AIAG…IGVL), 241-261 (IGDG…AGMI), and 298-318 (MLGF…ISAI).

This sequence belongs to the FHIPEP (flagella/HR/invasion proteins export pore) family.

The protein localises to the cell inner membrane. Involved in the secretion of harpin; a proteinaceous elicitor of the hypersensitivity response in plants. The chain is Harpin secretion protein HrpI (hrpI) from Erwinia amylovora (Fire blight bacteria).